The following is a 148-amino-acid chain: uncharacterized protein (148 aa).

An HTH asnC-type domain is found at 4 to 65 (MDKVDLQLIK…IPNLEKLNYM (62 aa)). The segment at residues 23–42 (YRELAEMLGTTRQRVARKVD) is a DNA-binding region (H-T-H motif).

This is an uncharacterized protein from Pyrococcus furiosus (strain ATCC 43587 / DSM 3638 / JCM 8422 / Vc1).